A 139-amino-acid polypeptide reads, in one-letter code: ATP synthase epsilon chain (139 aa).

This sequence belongs to the ATPase epsilon chain family. In terms of assembly, F-type ATPases have 2 components, CF(1) - the catalytic core - and CF(0) - the membrane proton channel. CF(1) has five subunits: alpha(3), beta(3), gamma(1), delta(1), epsilon(1). CF(0) has three main subunits: a, b and c.

The protein resides in the cell inner membrane. Produces ATP from ADP in the presence of a proton gradient across the membrane. In Pseudomonas putida (strain W619), this protein is ATP synthase epsilon chain.